A 137-amino-acid polypeptide reads, in one-letter code: Peptide methionine sulfoxide reductase MsrB (137 aa).

Residues 7 to 129 (AEELKKNLSE…NSASLRFTDG (123 aa)) form the MsrB domain. Positions 46, 49, 95, and 98 each coordinate Zn(2+). The active-site Nucleophile is Cys118.

It belongs to the MsrB Met sulfoxide reductase family. Requires Zn(2+) as cofactor.

It catalyses the reaction L-methionyl-[protein] + [thioredoxin]-disulfide + H2O = L-methionyl-(R)-S-oxide-[protein] + [thioredoxin]-dithiol. The polypeptide is Peptide methionine sulfoxide reductase MsrB (Escherichia coli (strain K12 / MC4100 / BW2952)).